We begin with the raw amino-acid sequence, 434 residues long: APETALA2-like protein 2 (434 aa).

The tract at residues 1–116 is disordered; sequence MLLDLNVESP…KTRRGPRSRS (116 aa). The segment covering 12–23 has biased composition (low complexity); the sequence is RSGTSSSSVLNS. Residues 25–38 show a composition bias toward gly residues; it reads DAGGGGGGGGGGGL. Residues 72 to 87 show a composition bias toward pro residues; sequence LPPPPPAAPSPAPAWQ. A compositionally biased stretch (basic residues) spans 104 to 113; sequence VAKKTRRGPR. Residues 106 to 115 carry the Nuclear localization signal motif; the sequence is KKTRRGPRSR. 2 consecutive DNA-binding regions (AP2/ERF) follow at residues 118 to 174 and 210 to 267; these read QYRG…INFN and KFRG…TNFE. The EAR motif lies at 291-295; the sequence is LDLRI.

This sequence belongs to the AP2/ERF transcription factor family. AP2 subfamily. In terms of assembly, may form homodimer. Interacts with TPR2/ASP1. Highly expressed in developing panicles and in young seedlings. Present at low levels at all developmental stages.

The protein localises to the nucleus. Functionally, probable transcription factor. Involved in spikelet transition. Together with SNB, controls synergistically inflorescence architecture and floral meristem establishment via the regulation of spatio-temporal expression of B- and E-function floral organ identity genes in the lodicules and of spikelet meristem genes. Prevents lemma and palea elongation as well as grain growth. The protein is APETALA2-like protein 2 of Oryza sativa subsp. japonica (Rice).